Reading from the N-terminus, the 329-residue chain is Protein mlo2 (329 aa).

The UBR-type zinc finger occupies 33–104 (DTCTYSMGYL…HSIPCNLRKS (72 aa)). Residues 120 to 179 (GRFCICDTVYNPETEEGTMFQCILCEDWFHEKCLQKTNKGIAIPDAETFEWLVCSECSEK) form a PHD-type zinc finger.

Belongs to the UBR7 family.

Its function is as follows. Not known, interfere with mitotic chromosome segregation when overexpressed. The polypeptide is Protein mlo2 (mlo2) (Schizosaccharomyces pombe (strain 972 / ATCC 24843) (Fission yeast)).